Consider the following 307-residue polypeptide: RHOMBOID-like protein 6, mitochondrial (307 aa).

The N-terminal 62 residues, 1–62 (MRSRDMERGR…DCVAKLLRRF (62 aa)), are a transit peptide targeting the mitochondrion. 6 consecutive transmembrane segments (helical) span residues 105–125 (WLHA…IFGI), 136–156 (IGLI…LFLQ), 159–179 (ISVG…SELL), 191–211 (ALLS…LPWV), 214–234 (FAHI…LMQP), and 262–282 (LFFV…VMLF). Ser164 (nucleophile) is an active-site residue. His216 (charge relay system) is an active-site residue.

The protein belongs to the peptidase S54 family.

The protein localises to the mitochondrion membrane. The enzyme catalyses Cleaves type-1 transmembrane domains using a catalytic dyad composed of serine and histidine that are contributed by different transmembrane domains.. Its function is as follows. Probable rhomboid-type serine protease that catalyzes intramembrane proteolysis. Might be involved in response to abiotic stimuli. In Arabidopsis thaliana (Mouse-ear cress), this protein is RHOMBOID-like protein 6, mitochondrial.